A 122-amino-acid polypeptide reads, in one-letter code: Large ribosomal subunit protein uL22 (122 aa).

Positions 102-122 (VAEGKEMKSSKSHKKNQAEGK) are disordered.

It belongs to the universal ribosomal protein uL22 family. As to quaternary structure, part of the 50S ribosomal subunit.

Functionally, this protein binds specifically to 23S rRNA; its binding is stimulated by other ribosomal proteins, e.g. L4, L17, and L20. It is important during the early stages of 50S assembly. It makes multiple contacts with different domains of the 23S rRNA in the assembled 50S subunit and ribosome. In terms of biological role, the globular domain of the protein is located near the polypeptide exit tunnel on the outside of the subunit, while an extended beta-hairpin is found that lines the wall of the exit tunnel in the center of the 70S ribosome. The protein is Large ribosomal subunit protein uL22 of Helicobacter pylori (strain HPAG1).